The sequence spans 487 residues: NADH-quinone oxidoreductase subunit N (487 aa).

The next 13 membrane-spanning stretches (helical) occupy residues 7 to 27, 38 to 58, 79 to 99, 111 to 131, 164 to 184, 207 to 227, 238 to 258, 276 to 296, 301 to 321, 328 to 348, 373 to 393, 406 to 426, and 451 to 471; these read ILGP…LLMV, LVGL…GLGA, YAKA…MVWL, ILVL…DLIA, FVLG…VYGF, LLIG…AVPF, APTP…LTLF, VIIL…IVQT, LMAY…AAGT, VLVY…VILA, AAAM…AGFF, GLFA…FYYL, and VILI…SVVV.

It belongs to the complex I subunit 2 family. NDH-1 is composed of 14 different subunits. Subunits NuoA, H, J, K, L, M, N constitute the membrane sector of the complex.

The protein localises to the cell inner membrane. The catalysed reaction is a quinone + NADH + 5 H(+)(in) = a quinol + NAD(+) + 4 H(+)(out). Its function is as follows. NDH-1 shuttles electrons from NADH, via FMN and iron-sulfur (Fe-S) centers, to quinones in the respiratory chain. The immediate electron acceptor for the enzyme in this species is believed to be ubiquinone. Couples the redox reaction to proton translocation (for every two electrons transferred, four hydrogen ions are translocated across the cytoplasmic membrane), and thus conserves the redox energy in a proton gradient. The chain is NADH-quinone oxidoreductase subunit N from Rhodospirillum rubrum (strain ATCC 11170 / ATH 1.1.1 / DSM 467 / LMG 4362 / NCIMB 8255 / S1).